The primary structure comprises 308 residues: Ribosomal RNA small subunit methyltransferase H (308 aa).

S-adenosyl-L-methionine contacts are provided by residues 34–36 (GGH), aspartate 54, phenylalanine 80, aspartate 101, and glutamine 108.

The protein belongs to the methyltransferase superfamily. RsmH family.

It is found in the cytoplasm. It carries out the reaction cytidine(1402) in 16S rRNA + S-adenosyl-L-methionine = N(4)-methylcytidine(1402) in 16S rRNA + S-adenosyl-L-homocysteine + H(+). Functionally, specifically methylates the N4 position of cytidine in position 1402 (C1402) of 16S rRNA. The chain is Ribosomal RNA small subunit methyltransferase H from Ureaplasma urealyticum serovar 10 (strain ATCC 33699 / Western).